The following is a 103-amino-acid chain: Histone H4 (103 aa).

Gly residues predominate over residues 1-14 (MSGRGKGGKGLGKG). The interval 1–20 (MSGRGKGGKGLGKGGAKRHR) is disordered. Position 2 is an N-acetylserine (Ser-2). Lys-17 is subject to N6-acetyllysine. A DNA-binding region spans residues 17 to 21 (KRHRR). N6-methylated lysine is present on Lys-80.

This sequence belongs to the histone H4 family. As to quaternary structure, the nucleosome is a histone octamer containing two molecules each of H2A, H2B, H3 and H4 assembled in one H3-H4 heterotetramer and two H2A-H2B heterodimers. The octamer wraps approximately 147 bp of DNA.

Its subcellular location is the nucleus. It localises to the chromosome. Core component of nucleosome. Nucleosomes wrap and compact DNA into chromatin, limiting DNA accessibility to the cellular machineries which require DNA as a template. Histones thereby play a central role in transcription regulation, DNA repair, DNA replication and chromosomal stability. DNA accessibility is regulated via a complex set of post-translational modifications of histones, also called histone code, and nucleosome remodeling. The polypeptide is Histone H4 (Olisthodiscus luteus (Marine phytoflagellate)).